The primary structure comprises 182 residues: uncharacterized protein (182 aa).

To H.pylori HP0274.

This is an uncharacterized protein from Methanocaldococcus jannaschii (strain ATCC 43067 / DSM 2661 / JAL-1 / JCM 10045 / NBRC 100440) (Methanococcus jannaschii).